The following is a 102-amino-acid chain: Small ribosomal subunit protein uS10 (102 aa).

It belongs to the universal ribosomal protein uS10 family. In terms of assembly, part of the 30S ribosomal subunit.

Functionally, involved in the binding of tRNA to the ribosomes. The chain is Small ribosomal subunit protein uS10 from Citrifermentans bemidjiense (strain ATCC BAA-1014 / DSM 16622 / JCM 12645 / Bem) (Geobacter bemidjiensis).